Here is a 223-residue protein sequence, read N- to C-terminus: MVSFTSLLAAFSVVSGVLTSPIAVVPEVNTALAKRTPSSTGTSGGFYYSFWTDTPNSVTYTNGDAGKFSVSWKNNNGNHVGGKGWRTGSARTIKYSGSYKPNGNSYLAIYGWTRSPLIEYYIVESFGTYNPSTGATSKGQFTVDGSVYDLYTSTRTNAPSIEGTRTFTQFWSVRRTKRTSGSVNTGAHFAAWKKAGMNLGSHDYQILAVEGYKSSGSATMTVS.

The N-terminal stretch at 1 to 19 (MVSFTSLLAAFSVVSGVLT) is a signal peptide. The GH11 domain occupies 34 to 223 (KRTPSSTGTS…SSGSATMTVS (190 aa)). Residue glutamate 119 is the Nucleophile of the active site. Residues 174-184 (RRTKRTSGSVN) are nuclear localization signal. The Proton donor role is filled by glutamate 210.

It belongs to the glycosyl hydrolase 11 (cellulase G) family.

Its subcellular location is the secreted. The protein resides in the host nucleus. The catalysed reaction is Endohydrolysis of (1-&gt;4)-beta-D-xylosidic linkages in xylans.. Its pathway is glycan degradation; xylan degradation. Functionally, endo-1,4-beta-xylanase involved in the hydrolysis of xylan, a major structural heterogeneous polysaccharide found in plant biomass representing the second most abundant polysaccharide in the biosphere, after cellulose. Acts as an effector that localizes to the host nucleus to contribute to the virulence process. Induces host innate immunity responses; triggers BAK1-and SOBIR1-dependent cell death, salicylic acid signaling and jasmonic acid signaling. Does not exhibit any cell death when transiently expressed in N.benthamiana. The sequence is that of Ethylene-inducing xylanase 1 from Verticillium dahliae (strain VdLs.17 / ATCC MYA-4575 / FGSC 10137) (Verticillium wilt).